Reading from the N-terminus, the 126-residue chain is H2B.U histone 2 (126 aa).

The interval 1 to 35 (MPEPSRSTPAPKKGSKKAITKAQKKDGKKRKRGRK) is disordered. P2 carries the N-acetylproline modification. Position 3 is an ADP-ribosyl glutamic acid (E3). An ADP-ribosylserine modification is found at S7. K12 carries the post-translational modification N6-(beta-hydroxybutyryl)lysine; alternate. K12 and K13 each carry N6-acetyllysine; alternate. K12 and K13 each carry N6-crotonyllysine; alternate. K12 is subject to N6-lactoyllysine; alternate. At K13 the chain carries N6-(2-hydroxyisobutyryl)lysine; alternate. A Phosphoserine; by STK4/MST1 modification is found at S15. Residues K16, K17, K21, and K24 each carry the N6-acetyllysine; alternate modification. N6-crotonyllysine; alternate is present on residues K16, K17, K21, and K24. N6-lactoyllysine; alternate occurs at positions 16, 17, 21, and 24. Position 17 is an N6-glutaryllysine; alternate (K17). K21 carries the post-translational modification N6-(beta-hydroxybutyryl)lysine; alternate. Residues K21 and K24 each carry the N6-(2-hydroxyisobutyryl)lysine; alternate modification. N6-butyryllysine; alternate is present on K21. A Glycyl lysine isopeptide (Lys-Gly) (interchain with G-Cter in SUMO2); alternate cross-link involves residue K21. An N6-(2-hydroxyisobutyryl)lysine modification is found at K25. Position 35 is an N6-(beta-hydroxybutyryl)lysine; alternate (K35). K35 is modified (N6-crotonyllysine; alternate). Position 35 is an N6-(2-hydroxyisobutyryl)lysine; alternate (K35). At K35 the chain carries N6-glutaryllysine; alternate. K35 carries the post-translational modification N6-succinyllysine; alternate. K35 participates in a covalent cross-link: Glycyl lysine isopeptide (Lys-Gly) (interchain with G-Cter in ubiquitin); alternate. At E36 the chain carries PolyADP-ribosyl glutamic acid. S37 carries the post-translational modification Phosphoserine; by AMPK. K44 bears the N6-lactoyllysine; alternate mark. N6-(2-hydroxyisobutyryl)lysine; alternate is present on residues K44, K47, and K58. An N6-glutaryllysine; alternate mark is found at K44 and K47. K47 bears the N6-methyllysine; alternate mark. K58 is subject to N6,N6-dimethyllysine; alternate. At R80 the chain carries Dimethylated arginine. The residue at position 86 (K86) is an N6-acetyllysine; alternate. K86 carries the N6-lactoyllysine; alternate modification. K86 bears the N6-(2-hydroxyisobutyryl)lysine; alternate mark. N6,N6,N6-trimethyllysine; alternate is present on K86. 2 positions are modified to omega-N-methylarginine: R87 and R93. An N6-(beta-hydroxybutyryl)lysine; alternate modification is found at K109. K109 carries the post-translational modification N6-lactoyllysine; alternate. At K109 the chain carries N6-(2-hydroxyisobutyryl)lysine; alternate. K109 carries the post-translational modification N6-glutaryllysine; alternate. Residue K109 is modified to N6-methyllysine; alternate. O-linked (GlcNAc) serine glycosylation occurs at S113. Phosphothreonine is present on T116. Position 117 is an N6-(beta-hydroxybutyryl)lysine; alternate (K117). N6-lactoyllysine; alternate is present on residues K117 and K121. K117 and K121 each carry N6-(2-hydroxyisobutyryl)lysine; alternate. K117 and K121 each carry N6-glutaryllysine; alternate. Residues K117 and K121 each carry the N6-succinyllysine; alternate modification. K117 bears the N6-methylated lysine; alternate mark. A Glycyl lysine isopeptide (Lys-Gly) (interchain with G-Cter in ubiquitin); alternate cross-link involves residue K121.

It belongs to the histone H2B family. As to quaternary structure, the nucleosome is a histone octamer containing two molecules each of H2A, H2B, H3 and H4 assembled in one H3-H4 heterotetramer and two H2A-H2B heterodimers. The octamer wraps approximately 147 bp of DNA. In terms of processing, monoubiquitination at Lys-35 (H2BK34Ub) by the MSL1/MSL2 dimer is required for histone H3 'Lys-4' (H3K4me) and 'Lys-79' (H3K79me) methylation and transcription activation at specific gene loci, such as HOXA9 and MEIS1 loci. Similarly, monoubiquitination at Lys-121 (H2BK120Ub) by the RNF20/40 complex gives a specific tag for epigenetic transcriptional activation and is also prerequisite for histone H3 'Lys-4' and 'Lys-79' methylation. It also functions cooperatively with the FACT dimer to stimulate elongation by RNA polymerase II. H2BK120Ub also acts as a regulator of mRNA splicing: deubiquitination by USP49 is required for efficient cotranscriptional splicing of a large set of exons. Phosphorylated on Ser-15 (H2BS14ph) by STK4/MST1 during apoptosis; which facilitates apoptotic chromatin condensation. Also phosphorylated on Ser-15 in response to DNA double strand breaks (DSBs), and in correlation with somatic hypermutation and immunoglobulin class-switch recombination. Phosphorylation at Ser-37 (H2BS36ph) by AMPK in response to stress promotes transcription. Post-translationally, glcNAcylation at Ser-113 promotes monoubiquitination of Lys-121. It fluctuates in response to extracellular glucose, and associates with transcribed genes. In terms of processing, ADP-ribosylated by PARP1 or PARP2 on Ser-7 (H2BS6ADPr) in response to DNA damage. H2BS6ADPr promotes recruitment of CHD1L. Mono-ADP-ribosylated on Glu-3 (H2BE2ADPr) by PARP3 in response to single-strand breaks. Poly ADP-ribosylation on Glu-36 (H2BE35ADPr) by PARP1 regulates adipogenesis: it inhibits phosphorylation at Ser-37 (H2BS36ph), thereby blocking expression of pro-adipogenetic genes. Crotonylation (Kcr) is specifically present in male germ cells and marks testis-specific genes in post-meiotic cells, including X-linked genes that escape sex chromosome inactivation in haploid cells. Crotonylation marks active promoters and enhancers and confers resistance to transcriptional repressors. It is also associated with post-meiotically activated genes on autosomes. Post-translationally, hydroxybutyrylation of histones is induced by starvation. In terms of processing, lactylated in macrophages by EP300/P300 by using lactoyl-CoA directly derived from endogenous or exogenous lactate, leading to stimulates gene transcription.

Its subcellular location is the nucleus. The protein resides in the chromosome. Core component of nucleosome. Nucleosomes wrap and compact DNA into chromatin, limiting DNA accessibility to the cellular machineries which require DNA as a template. Histones thereby play a central role in transcription regulation, DNA repair, DNA replication and chromosomal stability. DNA accessibility is regulated via a complex set of post-translational modifications of histones, also called histone code, and nucleosome remodeling. The polypeptide is H2B.U histone 2 (Mus musculus (Mouse)).